The chain runs to 61 residues: Temporin-1Tb (61 aa).

The first 22 residues, methionine 1–cysteine 22, serve as a signal peptide directing secretion. A propeptide spanning residues glutamate 23–glutamate 44 is cleaved from the precursor. Leucine amide is present on leucine 59.

This sequence belongs to the frog skin active peptide (FSAP) family. Temporin subfamily. Homo-oligomerizes in membranes as homodimers, homotrimers, or even homotetramers. Oligomerizes in presence of LPS. In Gram-positive bacterial mimetic membranes, the aggregation is weakly pronounced, and penetration proceeds more rapidly and is deeper than in Gram-negative bacterial mimetic membranes where aggregation is high. Homo-oligomerization is prevented by temporin-L. Expressed by the skin glands.

It is found in the secreted. The protein localises to the target cell membrane. Its subcellular location is the target cell. It localises to the target cell cytoplasm. In terms of biological role, amphipathic alpha-helical antimicrobial peptide with potent activity against Gram-positive bacteria, weak activity against Gram-negative bacteria, and moderate activity against fungi. Mainly acts by causing membrane permeabilization, but is unable to forme pore-like openings. Is also able to penetrate eukaryotic cells (keratinocytes), and kill intracellular S.aureus (both wild-type and MRSA) without injuring host cells. Shows inhibitory effect on biofilm formation of Gram-positive bacteria, but not of Gram-negative bacteria. Shows antiviral activity against herpes simplex virus 1 (HSV-1) by disrupting the viral envelope. Also displays anti-leishmania activity by damaging parasite membrane. Does not show hemolytic activity. Acts synergistically with temporin-L that improves temporin-1Tb activity by preventing its self-association in lipopolysaccharides (LPS). In vitro, promotes cell migration and wound healing. This chain is Temporin-1Tb, found in Rana temporaria (European common frog).